The primary structure comprises 398 residues: 1-deoxy-D-xylulose 5-phosphate reductoisomerase (398 aa).

NADPH contacts are provided by Thr10, Gly11, Ser12, Ile13, Asn38, and Asn124. 1-deoxy-D-xylulose 5-phosphate is bound at residue Lys125. Glu126 is an NADPH binding site. Asp150 provides a ligand contact to Mn(2+). 1-deoxy-D-xylulose 5-phosphate contacts are provided by Ser151, Glu152, Ser186, and His209. Position 152 (Glu152) interacts with Mn(2+). An NADPH-binding site is contributed by Gly215. 4 residues coordinate 1-deoxy-D-xylulose 5-phosphate: Ser222, Asn227, Lys228, and Glu231. A Mn(2+)-binding site is contributed by Glu231.

This sequence belongs to the DXR family. It depends on Mg(2+) as a cofactor. Mn(2+) is required as a cofactor.

The enzyme catalyses 2-C-methyl-D-erythritol 4-phosphate + NADP(+) = 1-deoxy-D-xylulose 5-phosphate + NADPH + H(+). The protein operates within isoprenoid biosynthesis; isopentenyl diphosphate biosynthesis via DXP pathway; isopentenyl diphosphate from 1-deoxy-D-xylulose 5-phosphate: step 1/6. Its function is as follows. Catalyzes the NADPH-dependent rearrangement and reduction of 1-deoxy-D-xylulose-5-phosphate (DXP) to 2-C-methyl-D-erythritol 4-phosphate (MEP). The polypeptide is 1-deoxy-D-xylulose 5-phosphate reductoisomerase (Baumannia cicadellinicola subsp. Homalodisca coagulata).